We begin with the raw amino-acid sequence, 382 residues long: Lipid-A-disaccharide synthase (382 aa).

This sequence belongs to the LpxB family.

It catalyses the reaction 2-N,3-O-bis[(3R)-3-hydroxytetradecanoyl]-alpha-D-glucosaminyl 1-phosphate + UDP-2-N,3-O-bis[(3R)-3-hydroxytetradecanoyl]-alpha-D-glucosamine = lipid A disaccharide (E. coli) + UDP + H(+). The enzyme catalyses a lipid X + a UDP-2-N,3-O-bis[(3R)-3-hydroxyacyl]-alpha-D-glucosamine = a lipid A disaccharide + UDP + H(+). Its pathway is glycolipid biosynthesis; lipid IV(A) biosynthesis; lipid IV(A) from (3R)-3-hydroxytetradecanoyl-[acyl-carrier-protein] and UDP-N-acetyl-alpha-D-glucosamine: step 5/6. Functionally, condensation of UDP-2,3-diacylglucosamine and 2,3-diacylglucosamine-1-phosphate to form lipid A disaccharide, a precursor of lipid A, a phosphorylated glycolipid that anchors the lipopolysaccharide to the outer membrane of the cell. This chain is Lipid-A-disaccharide synthase, found in Escherichia coli O8 (strain IAI1).